A 241-amino-acid polypeptide reads, in one-letter code: Probable cobalt-factor III C(17)-methyltransferase (241 aa).

Belongs to the precorrin methyltransferase family.

It carries out the reaction Co(II)-factor III + S-adenosyl-L-methionine + H(+) = Co(II)-factor IV + S-adenosyl-L-homocysteine. It participates in cofactor biosynthesis; adenosylcobalamin biosynthesis; cob(II)yrinate a,c-diamide from sirohydrochlorin (anaerobic route): step 3/10. Functionally, methyltransferase that likely catalyzes the ring contraction and methylation of C-17 in cobalt-factor III to form cobalt-factor IV. May also convert cobalt-precorrin-3 to cobalt-precorrin-4. The sequence is that of Probable cobalt-factor III C(17)-methyltransferase (cbiH) from Salmonella typhimurium (strain LT2 / SGSC1412 / ATCC 700720).